The primary structure comprises 134 residues: Postmeiotic segregation increased 2-like protein 5 (134 aa).

The protein belongs to the DNA mismatch repair MutL/HexB family.

This Homo sapiens (Human) protein is Postmeiotic segregation increased 2-like protein 5 (PMS2P5).